The primary structure comprises 334 residues: WD repeat-containing protein 54 (334 aa).

WD repeat units lie at residues 116–155 (SSVQ…PNIV), 162–206 (GHQT…TLLT), and 250–289 (AHAR…ESGS).

In terms of assembly, homodimer and homotrimer; forms tight forms of dimers and trimers. Interacts with IZUMO1 and IZUMO1R/JUNO. In terms of processing, cross-linked to tightly form both dimers and trimers by TGM2. Cross-linking enhances the activation of EGF receptor-mediated signaling pathway. Cross-linking is inhibited by EGF. Ubiquitinated. EGF increases ubiquitination.

The protein resides in the vesicle. Its subcellular location is the cytoplasm. The protein localises to the cell membrane. Plays a role in the adhesion and fusion of the sperm-oocyte membrane through its interactions with IZUMO1 and IZUMO1R/JUNO. When cross-linked to form dimers and trimers, it has a regulatory effect on ERK signaling pathway activity in response to EGF stimulation. Colocalizes with the EGF receptor in WDR54-specific vesicle where it sustains the internalization and controls the degradation of the EGF receptor after EGF stimulation. This is WD repeat-containing protein 54 from Mus musculus (Mouse).